A 340-amino-acid polypeptide reads, in one-letter code: Phosphate acyltransferase (340 aa).

The protein belongs to the PlsX family. As to quaternary structure, homodimer. Probably interacts with PlsY.

It is found in the cytoplasm. It carries out the reaction a fatty acyl-[ACP] + phosphate = an acyl phosphate + holo-[ACP]. The protein operates within lipid metabolism; phospholipid metabolism. In terms of biological role, catalyzes the reversible formation of acyl-phosphate (acyl-PO(4)) from acyl-[acyl-carrier-protein] (acyl-ACP). This enzyme utilizes acyl-ACP as fatty acyl donor, but not acyl-CoA. In Trichodesmium erythraeum (strain IMS101), this protein is Phosphate acyltransferase.